A 352-amino-acid chain; its full sequence is N-acetyl-gamma-glutamyl-phosphate reductase (352 aa).

C155 is an active-site residue.

This sequence belongs to the NAGSA dehydrogenase family. Type 1 subfamily.

It is found in the cytoplasm. It carries out the reaction N-acetyl-L-glutamate 5-semialdehyde + phosphate + NADP(+) = N-acetyl-L-glutamyl 5-phosphate + NADPH + H(+). The protein operates within amino-acid biosynthesis; L-arginine biosynthesis; N(2)-acetyl-L-ornithine from L-glutamate: step 3/4. Catalyzes the NADPH-dependent reduction of N-acetyl-5-glutamyl phosphate to yield N-acetyl-L-glutamate 5-semialdehyde. The sequence is that of N-acetyl-gamma-glutamyl-phosphate reductase from Synechococcus elongatus (strain ATCC 33912 / PCC 7942 / FACHB-805) (Anacystis nidulans R2).